Consider the following 276-residue polypeptide: Non-homologous end joining protein Ku (276 aa).

One can recognise a Ku domain in the interval 11-177; sequence ISFGLVHIPI…PEEIRSMEPL (167 aa). Positions 256-276 are disordered; it reads QVKTQQKKEAAPKKERRRKTS.

Belongs to the prokaryotic Ku family. As to quaternary structure, homodimer. Interacts with LigD.

In terms of biological role, with LigD forms a non-homologous end joining (NHEJ) DNA repair enzyme, which repairs dsDNA breaks with reduced fidelity. Binds linear dsDNA with 5'- and 3'- overhangs but not closed circular dsDNA nor ssDNA. Recruits and stimulates the ligase activity of LigD. In Heliobacterium modesticaldum (strain ATCC 51547 / Ice1), this protein is Non-homologous end joining protein Ku.